The chain runs to 298 residues: Probable aspartoacylase (298 aa).

Zn(2+) contacts are provided by histidine 13 and glutamate 16. Substrate contacts are provided by residues arginine 54 and 61 to 62; that span reads NR. Position 103 (histidine 103) interacts with Zn(2+). 2 residues coordinate substrate: glutamate 161 and tyrosine 271.

It belongs to the AspA/AstE family. Aspartoacylase subfamily. Zn(2+) serves as cofactor.

It catalyses the reaction an N-acyl-L-aspartate + H2O = a carboxylate + L-aspartate. The sequence is that of Probable aspartoacylase from Prochlorococcus marinus (strain MIT 9515).